The primary structure comprises 184 residues: Large ribosomal subunit protein eL18 (184 aa).

This sequence belongs to the eukaryotic ribosomal protein eL18 family.

It is found in the cytoplasm. In Theileria parva (East coast fever infection agent), this protein is Large ribosomal subunit protein eL18 (RPL18).